The primary structure comprises 85 residues: Large ribosomal subunit protein bL31B (85 aa).

The protein belongs to the bacterial ribosomal protein bL31 family. Type B subfamily. In terms of assembly, part of the 50S ribosomal subunit.

The sequence is that of Large ribosomal subunit protein bL31B from Porphyromonas gingivalis (strain ATCC 33277 / DSM 20709 / CIP 103683 / JCM 12257 / NCTC 11834 / 2561).